Reading from the N-terminus, the 386-residue chain is MTTTLTNLLDLDPAQLIAYCGELGEKPFRAKQLQRWIHQFGASDFDAMTDLAKSLRDKLKTRAMIAAPAVISDHTSSDGTRKWLIDVGQGNAVETVFIPEENRGTLCISTQAGCAVNCRFCSTGKQGFNRNLSVGEIIGQLWMAEFELRRTKGIEPGPKGERQITNVVMMGMGEPLLNYEPTVTALKLMLDDNAYGLSRRRVTLSTSGVVPMIDKLSQDCAVALAVSLHASNDALRDGLVPLNKKYPLQELMAACKRYLEFAPRDFVTFEYCMLDGVNDSDQHARELLTLVRDVPCKFNLIPFNPFPESGLTRSNNPRIKAFAQVLMDGGLVTTIRKTRGDDIDAACGQLAGEVQDRTRVQDRMKKMAEYQEKFGKNFGRIVEIPS.

Glutamate 94 functions as the Proton acceptor in the catalytic mechanism. The 242-residue stretch at 100–341 (EENRGTLCIS…VTTIRKTRGD (242 aa)) folds into the Radical SAM core domain. Cysteine 107 and cysteine 347 are oxidised to a cystine. [4Fe-4S] cluster is bound by residues cysteine 114, cysteine 118, and cysteine 121. S-adenosyl-L-methionine contacts are provided by residues 173-174 (GE), serine 205, 227-229 (SLH), and asparagine 304. Cysteine 347 (S-methylcysteine intermediate) is an active-site residue.

The protein belongs to the radical SAM superfamily. RlmN family. It depends on [4Fe-4S] cluster as a cofactor.

It localises to the cytoplasm. The enzyme catalyses adenosine(2503) in 23S rRNA + 2 reduced [2Fe-2S]-[ferredoxin] + 2 S-adenosyl-L-methionine = 2-methyladenosine(2503) in 23S rRNA + 5'-deoxyadenosine + L-methionine + 2 oxidized [2Fe-2S]-[ferredoxin] + S-adenosyl-L-homocysteine. It catalyses the reaction adenosine(37) in tRNA + 2 reduced [2Fe-2S]-[ferredoxin] + 2 S-adenosyl-L-methionine = 2-methyladenosine(37) in tRNA + 5'-deoxyadenosine + L-methionine + 2 oxidized [2Fe-2S]-[ferredoxin] + S-adenosyl-L-homocysteine. Its function is as follows. Specifically methylates position 2 of adenine 2503 in 23S rRNA and position 2 of adenine 37 in tRNAs. m2A2503 modification seems to play a crucial role in the proofreading step occurring at the peptidyl transferase center and thus would serve to optimize ribosomal fidelity. The sequence is that of Dual-specificity RNA methyltransferase RlmN from Herminiimonas arsenicoxydans.